The chain runs to 341 residues: Glyceraldehyde-3-phosphate dehydrogenase, cytosolic (341 aa).

Residues 14 to 15 and aspartate 36 contribute to the NAD(+) site; that span reads RI. Residues 153–155, threonine 184, 213–214, and arginine 236 each bind D-glyceraldehyde 3-phosphate; these read SCT and TG. Cysteine 154 acts as the Nucleophile in catalysis. Asparagine 318 lines the NAD(+) pocket.

The protein belongs to the glyceraldehyde-3-phosphate dehydrogenase family. Homotetramer.

The protein localises to the cytoplasm. It carries out the reaction D-glyceraldehyde 3-phosphate + phosphate + NAD(+) = (2R)-3-phospho-glyceroyl phosphate + NADH + H(+). The protein operates within carbohydrate degradation; glycolysis; pyruvate from D-glyceraldehyde 3-phosphate: step 1/5. In terms of biological role, key enzyme in glycolysis that catalyzes the first step of the pathway by converting D-glyceraldehyde 3-phosphate (G3P) into 3-phospho-D-glyceroyl phosphate. Essential for the maintenance of cellular ATP levels and carbohydrate metabolism. This chain is Glyceraldehyde-3-phosphate dehydrogenase, cytosolic (GAPC), found in Chlamydomonas reinhardtii (Chlamydomonas smithii).